The chain runs to 864 residues: Probable beta-glucosidase J (864 aa).

The active site involves aspartate 233. Residues 411 to 578 (TGEPGYTFRV…DTDAAIQQAV (168 aa)) enclose the PA14 domain. Residues asparagine 434, asparagine 447, and asparagine 503 are each glycosylated (N-linked (GlcNAc...) asparagine).

The protein belongs to the glycosyl hydrolase 3 family.

The protein resides in the secreted. The enzyme catalyses Hydrolysis of terminal, non-reducing beta-D-glucosyl residues with release of beta-D-glucose.. Its pathway is glycan metabolism; cellulose degradation. Its function is as follows. Beta-glucosidases are one of a number of cellulolytic enzymes involved in the degradation of cellulosic biomass. Catalyzes the last step releasing glucose from the inhibitory cellobiose. In Neosartorya fischeri (strain ATCC 1020 / DSM 3700 / CBS 544.65 / FGSC A1164 / JCM 1740 / NRRL 181 / WB 181) (Aspergillus fischerianus), this protein is Probable beta-glucosidase J (bglJ).